The primary structure comprises 688 residues: Glycine--tRNA ligase beta subunit (688 aa).

It belongs to the class-II aminoacyl-tRNA synthetase family. Tetramer of two alpha and two beta subunits.

Its subcellular location is the cytoplasm. It carries out the reaction tRNA(Gly) + glycine + ATP = glycyl-tRNA(Gly) + AMP + diphosphate. This Shewanella sp. (strain ANA-3) protein is Glycine--tRNA ligase beta subunit.